Here is a 143-residue protein sequence, read N- to C-terminus: Large ribosomal subunit protein uL11 (143 aa).

This sequence belongs to the universal ribosomal protein uL11 family. Part of the ribosomal stalk of the 50S ribosomal subunit. Interacts with L10 and the large rRNA to form the base of the stalk. L10 forms an elongated spine to which L12 dimers bind in a sequential fashion forming a multimeric L10(L12)X complex. In terms of processing, one or more lysine residues are methylated.

In terms of biological role, forms part of the ribosomal stalk which helps the ribosome interact with GTP-bound translation factors. The polypeptide is Large ribosomal subunit protein uL11 (Cutibacterium acnes (strain DSM 16379 / KPA171202) (Propionibacterium acnes)).